The following is a 140-amino-acid chain: Large ribosomal subunit protein uL11 (140 aa).

This sequence belongs to the universal ribosomal protein uL11 family. As to quaternary structure, part of the ribosomal stalk of the 50S ribosomal subunit. Interacts with L10 and the large rRNA to form the base of the stalk. L10 forms an elongated spine to which L12 dimers bind in a sequential fashion forming a multimeric L10(L12)X complex. In terms of processing, one or more lysine residues are methylated.

Forms part of the ribosomal stalk which helps the ribosome interact with GTP-bound translation factors. This is Large ribosomal subunit protein uL11 from Campylobacter hominis (strain ATCC BAA-381 / DSM 21671 / CCUG 45161 / LMG 19568 / NCTC 13146 / CH001A).